The primary structure comprises 380 residues: MSKRDYYEVLGVSKDASERDIKKAYKRLAMKYHPDRTSGDKELETKFKEVKEAYEILTDAQKRQTYDQYGHAAFEQGGGGGGHGGFGGGHGDFGDVFGDVFGDIFGGGGGRRQSRQQRGSDLRYNMDLSLEEAVRGKEVEIKIPTWVGCDPCDGSGAKAGSKPKTCTTCHGAGQVQMRQGFFAVQQTCPTCQGQGQIISNPCDSCHGQGRVEKTKTLSVKIPAGVDTGDRIRLTGEGEAGMHGAPSGDLYVQVSVREHRIFVRDANNLHCEVPISFTTAGLGGEIEVPTLDGRAKLKIPSETQTGKMFRMRGKGVKSVRSGAIGDLICKVVIETPINLNERQRELLEELEESMGKDSSKNRPKEQGFFDGVKKFFDDLTK.

The J domain occupies Asp-5–Gly-70. A CR-type zinc finger spans residues Gly-136–Thr-214. Residues Cys-149, Cys-152, Cys-166, Cys-169, Cys-188, Cys-191, Cys-202, and Cys-205 each coordinate Zn(2+). 4 CXXCXGXG motif repeats span residues Cys-149–Gly-156, Cys-166–Gly-173, Cys-188–Gly-195, and Cys-202–Gly-209.

This sequence belongs to the DnaJ family. Homodimer. Zn(2+) is required as a cofactor.

Its subcellular location is the cytoplasm. In terms of biological role, participates actively in the response to hyperosmotic and heat shock by preventing the aggregation of stress-denatured proteins and by disaggregating proteins, also in an autonomous, DnaK-independent fashion. Unfolded proteins bind initially to DnaJ; upon interaction with the DnaJ-bound protein, DnaK hydrolyzes its bound ATP, resulting in the formation of a stable complex. GrpE releases ADP from DnaK; ATP binding to DnaK triggers the release of the substrate protein, thus completing the reaction cycle. Several rounds of ATP-dependent interactions between DnaJ, DnaK and GrpE are required for fully efficient folding. Also involved, together with DnaK and GrpE, in the DNA replication of plasmids through activation of initiation proteins. The polypeptide is Chaperone protein DnaJ (Pseudoalteromonas translucida (strain TAC 125)).